The following is a 379-amino-acid chain: Alcohol dehydrogenase 3 (379 aa).

Residues Cys-47, Thr-49, His-69, Cys-99, Cys-102, Cys-105, Cys-113, and Cys-177 each coordinate Zn(2+). Residues Thr-49 and His-69 each coordinate an alcohol. Thr-49 is an NAD(+) binding site. NAD(+) contacts are provided by residues 202 to 207 (GLGAVG), Asp-226, Lys-231, Thr-272, Val-295, 295 to 297 (VGV), Phe-322, and Arg-372.

This sequence belongs to the zinc-containing alcohol dehydrogenase family. Homodimer. It depends on Zn(2+) as a cofactor.

The protein localises to the cytoplasm. It catalyses the reaction a primary alcohol + NAD(+) = an aldehyde + NADH + H(+). The catalysed reaction is a secondary alcohol + NAD(+) = a ketone + NADH + H(+). This chain is Alcohol dehydrogenase 3 (ADH3), found in Hordeum vulgare (Barley).